We begin with the raw amino-acid sequence, 129 residues long: Small ribosomal subunit protein uS8 (129 aa).

The protein belongs to the universal ribosomal protein uS8 family. Part of the 30S ribosomal subunit.

In terms of biological role, one of the primary rRNA binding proteins, it binds directly to 16S rRNA central domain where it helps coordinate assembly of the platform of the 30S subunit. The chain is Small ribosomal subunit protein uS8 from Archaeoglobus fulgidus (strain ATCC 49558 / DSM 4304 / JCM 9628 / NBRC 100126 / VC-16).